The following is a 263-amino-acid chain: ATP synthase subunit a (263 aa).

6 consecutive transmembrane segments (helical) span residues 26 to 46 (VHLD…FFFS), 86 to 106 (VAPL…IDLI), 130 to 150 (DISA…FYTI), 166 to 186 (PFNH…TLLA), 195 to 215 (LFGN…MYMA), and 229 to 249 (LAWA…FMML).

It belongs to the ATPase A chain family. As to quaternary structure, F-type ATPases have 2 components, CF(1) - the catalytic core - and CF(0) - the membrane proton channel. CF(1) has five subunits: alpha(3), beta(3), gamma(1), delta(1), epsilon(1). CF(0) has three main subunits: a(1), b(2) and c(9-12). The alpha and beta chains form an alternating ring which encloses part of the gamma chain. CF(1) is attached to CF(0) by a central stalk formed by the gamma and epsilon chains, while a peripheral stalk is formed by the delta and b chains.

The protein resides in the cell inner membrane. Key component of the proton channel; it plays a direct role in the translocation of protons across the membrane. This chain is ATP synthase subunit a, found in Glaesserella parasuis serovar 5 (strain SH0165) (Haemophilus parasuis).